Reading from the N-terminus, the 129-residue chain is MKALGYWLMVVGSLRLASVWFGFFNIWALRLAVFSQTTMSEVHGRTFGVWTLLTCTLCFLCAFNLENKPLYLATFLSFIYALGHFLTEYLFYQTMTIANLSTVGFFAGTSIVWMLLEWNSLEQPHSKLS.

Transmembrane regions (helical) follow at residues 4 to 24 (LGYWLMVVGSLRLASVWFGFF), 46 to 66 (TFGVWTLLTCTLCFLCAFNLE), 71 to 91 (YLATFLSFIYALGHFLTEYLF), and 96 to 116 (TIANLSTVGFFAGTSIVWMLL).

The protein belongs to the ERG28 family.

The protein localises to the endoplasmic reticulum membrane. The protein is Ergosterol biosynthetic protein 28 of Arabidopsis thaliana (Mouse-ear cress).